We begin with the raw amino-acid sequence, 522 residues long: BAR/IMD domain-containing adapter protein 2-like 2 (522 aa).

The IMD domain occupies 1-239 (MAPEMDQFYR…HSPGLLGPAL (239 aa)). Disordered regions lie at residues 220–325 (SEAS…GGGG) and 404–502 (PMSP…GTNP). S231, S272, and S303 each carry phosphoserine. Residues 297 to 317 (RTPSASSLYASSTQRSRSNSF) show a composition bias toward polar residues. The SH3 domain occupies 324-387 (GGARRVRALV…PEAYVKPVEE (64 aa)). Over residues 443 to 456 (SQSRSRTPSRVPSR) the composition is skewed to low complexity. The segment covering 457–466 (APSPAPPPLP) has biased composition (pro residues). Phosphoserine is present on residues S472 and S475.

Expressed in the epithelial layer of the intestine and in the kidney.

It localises to the cell membrane. The protein localises to the cell junction. Its subcellular location is the cytoplasmic vesicle membrane. Its function is as follows. Phosphoinositides-binding protein that induces the formation of planar or gently curved membrane structures. Binds to phosphoinositides, including to phosphatidylinositol 4,5-bisphosphate (PtdIns(4,5)P2) headgroups. There seems to be no clear preference for a specific phosphoinositide. The chain is BAR/IMD domain-containing adapter protein 2-like 2 (Baiap2l2) from Mus musculus (Mouse).